The chain runs to 406 residues: Cysteine desulfurase (406 aa).

Lys-226 is modified (N6-(pyridoxal phosphate)lysine). Cys-364 acts as the Cysteine persulfide intermediate in catalysis.

It belongs to the class-V pyridoxal-phosphate-dependent aminotransferase family. Csd subfamily. In terms of assembly, homodimer. Interacts with SufE and the SufBCD complex composed of SufB, SufC and SufD. The interaction with SufE is required to mediate the direct transfer of the sulfur atom from the S-sulfanylcysteine. Requires pyridoxal 5'-phosphate as cofactor.

Its subcellular location is the cytoplasm. The catalysed reaction is (sulfur carrier)-H + L-cysteine = (sulfur carrier)-SH + L-alanine. The enzyme catalyses L-selenocysteine + AH2 = hydrogenselenide + L-alanine + A + H(+). Its pathway is cofactor biosynthesis; iron-sulfur cluster biosynthesis. Cysteine desulfurases mobilize the sulfur from L-cysteine to yield L-alanine, an essential step in sulfur metabolism for biosynthesis of a variety of sulfur-containing biomolecules. Component of the suf operon, which is activated and required under specific conditions such as oxidative stress and iron limitation. Acts as a potent selenocysteine lyase in vitro, that mobilizes selenium from L-selenocysteine. Selenocysteine lyase activity is however unsure in vivo. The protein is Cysteine desulfurase of Shigella sonnei (strain Ss046).